The following is a 288-amino-acid chain: ATP synthase gamma chain (288 aa).

It belongs to the ATPase gamma chain family. As to quaternary structure, F-type ATPases have 2 components, CF(1) - the catalytic core - and CF(0) - the membrane proton channel. CF(1) has five subunits: alpha(3), beta(3), gamma(1), delta(1), epsilon(1). CF(0) has three main subunits: a, b and c.

The protein localises to the cell inner membrane. Functionally, produces ATP from ADP in the presence of a proton gradient across the membrane. The gamma chain is believed to be important in regulating ATPase activity and the flow of protons through the CF(0) complex. In Rickettsia prowazekii (strain Madrid E), this protein is ATP synthase gamma chain.